A 664-amino-acid polypeptide reads, in one-letter code: E3 ubiquitin-protein ligase CHFR (664 aa).

Residues 1–21 (MERPEEGKQSPPPQPWGRLLR) are disordered. Residues 38 to 89 (WTIGRRRGCDLSFPSNKLVSGDHCRIVVDEKSGQVTLEDTSTSGTVINKLKV) form the FHA domain. A disordered region spans residues 142-267 (FHGTKDTSGA…KKMRGDGDLD (126 aa)). Positions 186–198 (PTASASSTEPSPA) are enriched in low complexity. S244 carries the post-translational modification Phosphoserine. Residues 254–264 (EPVKKKMRGDG) show a composition bias toward basic and acidic residues. The segment at 304 to 343 (CIICQDLLHDCVSLQPCMHTFCAACYSGWMERSSLCPTCR) adopts an RING-type zinc-finger fold. Phosphothreonine is present on T386. 2 disordered regions span residues 388 to 417 (DMLQPKVRRSFSDEEGSSEDLLELSDVDSE) and 439 to 461 (AQPPHCPAPEGEPGAPQALGDAP). Residues 400 to 417 (DEEGSSEDLLELSDVDSE) are compositionally biased toward acidic residues. Residues 633-655 (PDCYWGRNCRTQVKAHHAMKFNH) form a PBZ-type zinc finger.

Belongs to the CHFR family. In terms of assembly, interacts with HDAC1 and HDAC2. Interacts with PML (with sumoylated form of PML). Poly-ADP-ribosylated. In addition to binding non covalently poly(ADP-ribose) via its PBZ-type zinc finger, the protein is also covalently poly-ADP-ribosylated by PARP1. Post-translationally, autoubiquitinated; may regulate its cellular level. In terms of processing, phosphorylated by PKB. Phosphorylation may affect its E3 ligase activity. Ubiquitous.

It localises to the nucleus. Its subcellular location is the PML body. The enzyme catalyses S-ubiquitinyl-[E2 ubiquitin-conjugating enzyme]-L-cysteine + [acceptor protein]-L-lysine = [E2 ubiquitin-conjugating enzyme]-L-cysteine + N(6)-ubiquitinyl-[acceptor protein]-L-lysine.. The protein operates within protein modification; protein ubiquitination. Functionally, E3 ubiquitin-protein ligase that functions in the antephase checkpoint by actively delaying passage into mitosis in response to microtubule poisons. Acts in early prophase before chromosome condensation, when the centrosome move apart from each other along the periphery of the nucleus. Probably involved in signaling the presence of mitotic stress caused by microtubule poisons by mediating the 'Lys-48'-linked ubiquitination of target proteins, leading to their degradation by the proteasome. Promotes the ubiquitination and subsequent degradation of AURKA and PLK1. Probably acts as a tumor suppressor, possibly by mediating the polyubiquitination of HDAC1, leading to its degradation. May also promote the formation of 'Lys-63'-linked polyubiquitin chains and functions with the specific ubiquitin-conjugating UBC13-MMS2 (UBE2N-UBE2V2) heterodimer. Substrates that are polyubiquitinated at 'Lys-63' are usually not targeted for degradation, but are rather involved in signaling cellular stress. This is E3 ubiquitin-protein ligase CHFR (CHFR) from Homo sapiens (Human).